A 577-amino-acid chain; its full sequence is Proline--tRNA ligase (577 aa).

Belongs to the class-II aminoacyl-tRNA synthetase family. ProS type 1 subfamily. As to quaternary structure, homodimer.

Its subcellular location is the cytoplasm. It catalyses the reaction tRNA(Pro) + L-proline + ATP = L-prolyl-tRNA(Pro) + AMP + diphosphate. Functionally, catalyzes the attachment of proline to tRNA(Pro) in a two-step reaction: proline is first activated by ATP to form Pro-AMP and then transferred to the acceptor end of tRNA(Pro). As ProRS can inadvertently accommodate and process non-cognate amino acids such as alanine and cysteine, to avoid such errors it has two additional distinct editing activities against alanine. One activity is designated as 'pretransfer' editing and involves the tRNA(Pro)-independent hydrolysis of activated Ala-AMP. The other activity is designated 'posttransfer' editing and involves deacylation of mischarged Ala-tRNA(Pro). The misacylated Cys-tRNA(Pro) is not edited by ProRS. The sequence is that of Proline--tRNA ligase from Thermotoga neapolitana (strain ATCC 49049 / DSM 4359 / NBRC 107923 / NS-E).